An 864-amino-acid polypeptide reads, in one-letter code: Leucine--tRNA ligase (864 aa).

A 'HIGH' region motif is present at residues 42-52 (PYPSGKLHMGH). Positions 624 to 628 (KMSKS) match the 'KMSKS' region motif. Lys627 contacts ATP.

Belongs to the class-I aminoacyl-tRNA synthetase family.

The protein localises to the cytoplasm. It carries out the reaction tRNA(Leu) + L-leucine + ATP = L-leucyl-tRNA(Leu) + AMP + diphosphate. This chain is Leucine--tRNA ligase, found in Burkholderia lata (strain ATCC 17760 / DSM 23089 / LMG 22485 / NCIMB 9086 / R18194 / 383).